Here is a 242-residue protein sequence, read N- to C-terminus: UPF0173 metal-dependent hydrolase Rxyl_1261 (242 aa).

Belongs to the UPF0173 family.

The sequence is that of UPF0173 metal-dependent hydrolase Rxyl_1261 from Rubrobacter xylanophilus (strain DSM 9941 / JCM 11954 / NBRC 16129 / PRD-1).